Here is a 247-residue protein sequence, read N- to C-terminus: Triosephosphate isomerase (247 aa).

9–11 (NWK) contacts substrate. His-93 (electrophile) is an active-site residue. Glu-163 acts as the Proton acceptor in catalysis. Substrate contacts are provided by residues Gly-169, Ser-209, and 230–231 (GG).

Belongs to the triosephosphate isomerase family. As to quaternary structure, homodimer.

Its subcellular location is the cytoplasm. It catalyses the reaction D-glyceraldehyde 3-phosphate = dihydroxyacetone phosphate. The protein operates within carbohydrate biosynthesis; gluconeogenesis. Its pathway is carbohydrate degradation; glycolysis; D-glyceraldehyde 3-phosphate from glycerone phosphate: step 1/1. Functionally, involved in the gluconeogenesis. Catalyzes stereospecifically the conversion of dihydroxyacetone phosphate (DHAP) to D-glyceraldehyde-3-phosphate (G3P). This Dinoroseobacter shibae (strain DSM 16493 / NCIMB 14021 / DFL 12) protein is Triosephosphate isomerase.